The following is a 661-amino-acid chain: CD180 antigen (661 aa).

A signal peptide spans 1–20; the sequence is MAPDISCFFLVALFLASCRA. At 21-626 the chain is on the extracellular side; sequence TTSSDQKCIE…RLSDVTLSCS (606 aa). Residues 33-53 enclose the LRRNT domain; that stretch reads VNKTYNCENLGLNEIPGTLPN. N-linked (GlcNAc...) asparagine glycans are attached at residues N34, N53, N70, and N78. LRR repeat units follow at residues 54–75, 78–99, 102–123, 126–147, 150–171, 174–195, and 201–221; these read STEC…TFSR, NLTF…TFQS, RLDT…ALSG, ALKH…PLHN, TLES…KGFP, KLKV…DMSS, and NLSL…AFDS. N-linked (GlcNAc...) asparagine glycosylation is found at N201, N244, and N288. 5 LRR repeats span residues 275–296, 299–321, 322–343, 346–366, and 371–391; these read SVES…TFHC, GLQE…VGLS, TLKK…SASN, SLTH…TGCL, and NLRE…CNLQ. Residues N394 and N402 are each glycosylated (N-linked (GlcNAc...) asparagine). 7 LRR repeats span residues 397 to 418, 421 to 442, 446 to 466, 470 to 493, 497 to 518, 521 to 544, and 546 to 566; these read HLQS…AFKE, QLEL…SPFQ, LLKV…QLFD, ALQH…NSLQ, RLEI…AFTS, MMNH…SHLK, and IYLN…LPIL. N451 carries an N-linked (GlcNAc...) asparagine glycan. Residues 577–627 enclose the LRRCT domain; it reads NPLDCTCSNIYFLEWYKENMQKLEDTEDTLCENPPLLRGVRLSDVTLSCSM. Residues 627–650 traverse the membrane as a helical segment; it reads MAAVGIFFLIVFLLVFAILLIFAV. Topologically, residues 651–661 are cytoplasmic; sequence KYFLRWKYQHI.

It belongs to the Toll-like receptor family. M-shaped tetramer of two CD180-LY86 heterodimers. B-lymphocytes and spleen. Not detected in thymus, kidney, muscle, heart, brain or liver.

It is found in the cell membrane. Its function is as follows. May cooperate with MD-1 and TLR4 to mediate the innate immune response to bacterial lipopolysaccharide (LPS) in B-cells. Leads to NF-kappa-B activation. Also involved in the life/death decision of B-cells. This Mus musculus (Mouse) protein is CD180 antigen (Cd180).